A 602-amino-acid chain; its full sequence is Elongation factor 4 (602 aa).

Positions 7-190 (KHIRNFCIVA…AVVQKVPAPS (184 aa)) constitute a tr-type G domain. GTP contacts are provided by residues 19–24 (DHGKST) and 137–140 (NKID).

This sequence belongs to the TRAFAC class translation factor GTPase superfamily. Classic translation factor GTPase family. LepA subfamily.

The protein localises to the cell membrane. It catalyses the reaction GTP + H2O = GDP + phosphate + H(+). In terms of biological role, required for accurate and efficient protein synthesis under certain stress conditions. May act as a fidelity factor of the translation reaction, by catalyzing a one-codon backward translocation of tRNAs on improperly translocated ribosomes. Back-translocation proceeds from a post-translocation (POST) complex to a pre-translocation (PRE) complex, thus giving elongation factor G a second chance to translocate the tRNAs correctly. Binds to ribosomes in a GTP-dependent manner. In Clostridium acetobutylicum (strain ATCC 824 / DSM 792 / JCM 1419 / IAM 19013 / LMG 5710 / NBRC 13948 / NRRL B-527 / VKM B-1787 / 2291 / W), this protein is Elongation factor 4.